The following is a 634-amino-acid chain: (-)-limonene synthase, chloroplastic (634 aa).

A chloroplast-targeting transit peptide spans 1-21 (MSPVSAIPLAYKLCLPRSLIS). (2E)-geranyl diphosphate is bound by residues arginine 348, aspartate 385, aspartate 389, arginine 526, and glycine 529. Residues aspartate 385 and aspartate 389 each coordinate Mg(2+). Residues 385–389 (DDIYD) carry the DDXXD motif motif. Mg(2+) is bound by residues glycine 529 and aspartate 537.

The protein belongs to the terpene synthase family. Tpsb subfamily. Monomer. Requires Mg(2+) as cofactor. The cofactor is Mn(2+).

The protein localises to the plastid. It localises to the chloroplast. The catalysed reaction is (2E)-geranyl diphosphate = (4S)-limonene + diphosphate. It functions in the pathway secondary metabolite biosynthesis; terpenoid biosynthesis. Its pathway is terpene metabolism; oleoresin biosynthesis. Functionally, monoterpene synthase (mono-TPS) involved in the biosynthesis of monoterpene natural products. Catalyzes the conversion of (2E)-geranyl diphosphate (GPP) into (-)-limonene. Not able to use geranylgeranyl pyrophosphate (GGPP) and farnesyl pyrophosphate (FPP) as substrates. The sequence is that of (-)-limonene synthase, chloroplastic from Picea sitchensis (Sitka spruce).